Here is a 695-residue protein sequence, read N- to C-terminus: Elongation factor G (695 aa).

The tr-type G domain occupies 12–286; sequence DKLRNIGIMA…AVIDYLPSPL (275 aa). GTP is bound by residues 21 to 28, 85 to 89, and 139 to 142; these read AHIDAGKT, DTPGH, and NKMD.

This sequence belongs to the TRAFAC class translation factor GTPase superfamily. Classic translation factor GTPase family. EF-G/EF-2 subfamily.

The protein localises to the cytoplasm. Its function is as follows. Catalyzes the GTP-dependent ribosomal translocation step during translation elongation. During this step, the ribosome changes from the pre-translocational (PRE) to the post-translocational (POST) state as the newly formed A-site-bound peptidyl-tRNA and P-site-bound deacylated tRNA move to the P and E sites, respectively. Catalyzes the coordinated movement of the two tRNA molecules, the mRNA and conformational changes in the ribosome. The polypeptide is Elongation factor G (Thermotoga petrophila (strain ATCC BAA-488 / DSM 13995 / JCM 10881 / RKU-1)).